A 344-amino-acid polypeptide reads, in one-letter code: Ketol-acid reductoisomerase (NADP(+)) (344 aa).

One can recognise a KARI N-terminal Rossmann domain in the interval 2-181; the sequence is AKVLYEKDIQ…GAARAGVLET (180 aa). NADP(+) is bound by residues 25 to 28, arginine 48, serine 52, and 82 to 85; these read YGSQ and DEMQ. Histidine 107 is an active-site residue. Glycine 133 serves as a coordination point for NADP(+). The KARI C-terminal knotted domain maps to 182–327; it reads SFQEETETDL…RELRELMPFV (146 aa). Residues aspartate 190, glutamate 194, glutamate 226, and glutamate 230 each coordinate Mg(2+). Position 251 (serine 251) interacts with substrate.

Belongs to the ketol-acid reductoisomerase family. Requires Mg(2+) as cofactor.

It carries out the reaction (2R)-2,3-dihydroxy-3-methylbutanoate + NADP(+) = (2S)-2-acetolactate + NADPH + H(+). It catalyses the reaction (2R,3R)-2,3-dihydroxy-3-methylpentanoate + NADP(+) = (S)-2-ethyl-2-hydroxy-3-oxobutanoate + NADPH + H(+). Its pathway is amino-acid biosynthesis; L-isoleucine biosynthesis; L-isoleucine from 2-oxobutanoate: step 2/4. It participates in amino-acid biosynthesis; L-valine biosynthesis; L-valine from pyruvate: step 2/4. Its function is as follows. Involved in the biosynthesis of branched-chain amino acids (BCAA). Catalyzes an alkyl-migration followed by a ketol-acid reduction of (S)-2-acetolactate (S2AL) to yield (R)-2,3-dihydroxy-isovalerate. In the isomerase reaction, S2AL is rearranged via a Mg-dependent methyl migration to produce 3-hydroxy-3-methyl-2-ketobutyrate (HMKB). In the reductase reaction, this 2-ketoacid undergoes a metal-dependent reduction by NADPH to yield (R)-2,3-dihydroxy-isovalerate. The sequence is that of Ketol-acid reductoisomerase (NADP(+)) from Oceanobacillus iheyensis (strain DSM 14371 / CIP 107618 / JCM 11309 / KCTC 3954 / HTE831).